The sequence spans 632 residues: FAD-binding monooxygenase ausB (632 aa).

A disordered region spans residues 1 to 50; the sequence is MASAPEVESVKTPDPASTKTQHTSIAEIHTADQTWNNESNTRLPPNHRHH. Composition is skewed to polar residues over residues 15–24 and 31–43; these read PASTKTQHTS and ADQTWNNESNTRL. FAD contacts are provided by residues 116-119, 128-129, and Y134; these read TWYW and DI. Residue 126–128 participates in NADP(+) binding; that stretch reads MCD. Residues 269-275 and 292-293 each bind NADP(+); these read TGSTAIQ and RT.

Belongs to the FAD-binding monooxygenase family. FAD is required as a cofactor.

It catalyses the reaction protoaustinoid A + AH2 + O2 = berkeleyone A + A + H2O. It participates in secondary metabolite biosynthesis; terpenoid biosynthesis. FAD-binding monooxygenase; part of the gene cluster that mediates the biosynthesis of calidodehydroaustin, a fungal meroterpenoid. The first step of the pathway is the synthesis of 3,5-dimethylorsellinic acid by the polyketide synthase ausA. 3,5-dimethylorsellinic acid is then prenylated by the polyprenyl transferase ausN. Further epoxidation by the FAD-dependent monooxygenase ausM and cyclization by the probable terpene cyclase ausL lead to the formation of protoaustinoid A. Protoaustinoid A is then oxidized to spiro-lactone preaustinoid A3 by the combined action of the FAD-binding monooxygenases ausB and ausC, and the dioxygenase ausE. Acid-catalyzed keto-rearrangement and ring contraction of the tetraketide portion of preaustinoid A3 by ausJ lead to the formation of preaustinoid A4. The aldo-keto reductase ausK, with the help of ausH, is involved in the next step by transforming preaustinoid A4 into isoaustinone which is in turn hydroxylated by the P450 monooxygenase ausI to form austinolide. The cytochrome P450 monooxygenase ausG modifies austinolide to austinol. Austinol is further acetylated to austin by the O-acetyltransferase ausP, which spontaneously changes to dehydroaustin. The cytochrome P450 monooxygenase ausR then converts dehydroaustin is into 7-dehydrodehydroaustin. The hydroxylation catalyzed by ausR permits the O-acetyltransferase ausQ to add an additional acetyl group to the molecule, leading to the formation of acetoxydehydroaustin. The short chain dehydrogenase ausT catalyzes the reduction of the double bond present between carbon atoms 1 and 2 to convert 7-dehydrodehydroaustin into 1,2-dihydro-7-hydroxydehydroaustin. AusQ catalyzes not only an acetylation reaction but also the addition of the PKS ausV diketide product to 1,2-dihydro-7-hydroxydehydroaustin, forming precalidodehydroaustin. Finally, the iron/alpha-ketoglutarate-dependent dioxygenase converts precalidodehydroaustin into calidodehydroaustin. This is FAD-binding monooxygenase ausB from Aspergillus calidoustus.